We begin with the raw amino-acid sequence, 34 residues long: Mu-conotoxin GS (34 aa).

3 disulfide bridges follow: C2/C14, C9/C19, and C13/C27. 2 positions are modified to 4-hydroxyproline: P10 and P11. E32 bears the 4-carboxyglutamate mark.

Expressed by the venom duct.

It localises to the secreted. Functionally, mu-conotoxins block voltage-gated sodium channels (Nav). No effect was observed upon injections into mice and goldfish (25 ug). The sequence is that of Mu-conotoxin GS from Conus geographus (Geography cone).